A 202-amino-acid chain; its full sequence is Imidazoleglycerol-phosphate dehydratase (202 aa).

Belongs to the imidazoleglycerol-phosphate dehydratase family.

It is found in the cytoplasm. It carries out the reaction D-erythro-1-(imidazol-4-yl)glycerol 3-phosphate = 3-(imidazol-4-yl)-2-oxopropyl phosphate + H2O. It functions in the pathway amino-acid biosynthesis; L-histidine biosynthesis; L-histidine from 5-phospho-alpha-D-ribose 1-diphosphate: step 6/9. This is Imidazoleglycerol-phosphate dehydratase from Lactococcus lactis subsp. cremoris (strain SK11).